Here is a 618-residue protein sequence, read N- to C-terminus: UvrABC system protein C (618 aa).

The GIY-YIG domain occupies 15-93; the sequence is RTPGVYLMKD…IKEHHPRYNI (79 aa). In terms of domain architecture, UVR spans 203-238; it reads NNLLRELRERMKMAAEQMNYEEAAFLRDRIRAIEET.

Belongs to the UvrC family. As to quaternary structure, interacts with UvrB in an incision complex.

It is found in the cytoplasm. The UvrABC repair system catalyzes the recognition and processing of DNA lesions. UvrC both incises the 5' and 3' sides of the lesion. The N-terminal half is responsible for the 3' incision and the C-terminal half is responsible for the 5' incision. This Syntrophus aciditrophicus (strain SB) protein is UvrABC system protein C.